The primary structure comprises 778 residues: Endonuclease MutS2 (778 aa).

328-335 (GPNTGGKT) is a binding site for ATP. The region spanning 702–777 (LDLRGKRYEE…GSGATIVTFK (76 aa)) is the Smr domain.

It belongs to the DNA mismatch repair MutS family. MutS2 subfamily. As to quaternary structure, homodimer. Binds to stalled ribosomes, contacting rRNA.

Endonuclease that is involved in the suppression of homologous recombination and thus may have a key role in the control of bacterial genetic diversity. In terms of biological role, acts as a ribosome collision sensor, splitting the ribosome into its 2 subunits. Detects stalled/collided 70S ribosomes which it binds and splits by an ATP-hydrolysis driven conformational change. Acts upstream of the ribosome quality control system (RQC), a ribosome-associated complex that mediates the extraction of incompletely synthesized nascent chains from stalled ribosomes and their subsequent degradation. Probably generates substrates for RQC. The protein is Endonuclease MutS2 of Streptococcus pneumoniae serotype 19F (strain G54).